The chain runs to 445 residues: Putative aldehyde dehydrogenase AldX (445 aa).

Catalysis depends on residues Glu214 and Cys248.

This sequence belongs to the aldehyde dehydrogenase family.

The catalysed reaction is an aldehyde + NAD(+) + H2O = a carboxylate + NADH + 2 H(+). This is Putative aldehyde dehydrogenase AldX (aldX) from Bacillus subtilis (strain 168).